We begin with the raw amino-acid sequence, 243 residues long: uncharacterized protein (243 aa).

Composition is skewed to basic and acidic residues over residues 1 to 11 (MSDEGYRELVE) and 167 to 178 (RNRDPPRPSYLR). 2 disordered regions span residues 1–26 (MSDE…SPDR) and 146–243 (ELYQ…CWPF). Over residues 185–200 (STTTARRPRAMTSTPE) the composition is skewed to low complexity.

This is an uncharacterized protein from Canis lupus familiaris (Dog).